We begin with the raw amino-acid sequence, 168 residues long: ATP synthase F(1) complex subunit delta, mitochondrial (168 aa).

The N-terminal 22 residues, 1–22 (MLPAALLRHPGLRRLVLQARTY), are a transit peptide targeting the mitochondrion. N6-acetyllysine; alternate occurs at positions 136 and 165. N6-succinyllysine; alternate occurs at positions 136 and 165.

This sequence belongs to the ATPase epsilon chain family. In terms of assembly, component of the ATP synthase complex composed at least of ATP5F1A/subunit alpha, ATP5F1B/subunit beta, ATP5MC1/subunit c (homooctomer), MT-ATP6/subunit a, MT-ATP8/subunit 8, ATP5ME/subunit e, ATP5MF/subunit f, ATP5MG/subunit g, ATP5MK/subunit k, ATP5MJ/subunit j, ATP5F1C/subunit gamma, ATP5F1D/subunit delta, ATP5F1E/subunit epsilon, ATP5PF/subunit F6, ATP5PB/subunit b, ATP5PD/subunit d, ATP5PO/subunit OSCP. ATP synthase complex consists of a soluble F(1) head domain (subunits alpha(3) and beta(3)) - the catalytic core - and a membrane F(0) domain - the membrane proton channel (subunits c, a, 8, e, f, g, k and j). These two domains are linked by a central stalk (subunits gamma, delta, and epsilon) rotating inside the F1 region and a stationary peripheral stalk (subunits F6, b, d, and OSCP). Component of a complex composed at least by ATPIF1, ATP5F1A, ATP5F1B, ATP5F1C AND ATP5F1E.

It is found in the mitochondrion. The protein resides in the mitochondrion inner membrane. In terms of biological role, subunit delta, of the mitochondrial membrane ATP synthase complex (F(1)F(0) ATP synthase or Complex V) that produces ATP from ADP in the presence of a proton gradient across the membrane which is generated by electron transport complexes of the respiratory chain. ATP synthase complex consist of a soluble F(1) head domain - the catalytic core - and a membrane F(1) domain - the membrane proton channel. These two domains are linked by a central stalk rotating inside the F(1) region and a stationary peripheral stalk. During catalysis, ATP synthesis in the catalytic domain of F(1) is coupled via a rotary mechanism of the central stalk subunits to proton translocation. In vivo, can only synthesize ATP although its ATP hydrolase activity can be activated artificially in vitro. With the central stalk subunit gamma, is essential for the biogenesis of F(1) catalytic part of the ATP synthase complex namely in the formation of F1 assembly intermediate. The protein is ATP synthase F(1) complex subunit delta, mitochondrial of Rattus norvegicus (Rat).